The sequence spans 454 residues: uncharacterized protein (454 aa).

[4Fe-4S] cluster contacts are provided by Cys73, Cys79, Cys82, and Cys154. S-adenosyl-L-methionine contacts are provided by Gln279, Phe307, Asp328, and Asp381. Catalysis depends on Cys408, which acts as the Nucleophile.

Belongs to the class I-like SAM-binding methyltransferase superfamily. RNA M5U methyltransferase family.

This is an uncharacterized protein from Leptospira interrogans serogroup Icterohaemorrhagiae serovar Lai (strain 56601).